Reading from the N-terminus, the 75-residue chain is Exodeoxyribonuclease 7 small subunit (75 aa).

This sequence belongs to the XseB family. In terms of assembly, heterooligomer composed of large and small subunits.

The protein resides in the cytoplasm. It carries out the reaction Exonucleolytic cleavage in either 5'- to 3'- or 3'- to 5'-direction to yield nucleoside 5'-phosphates.. In terms of biological role, bidirectionally degrades single-stranded DNA into large acid-insoluble oligonucleotides, which are then degraded further into small acid-soluble oligonucleotides. This Chlamydia caviae (strain ATCC VR-813 / DSM 19441 / 03DC25 / GPIC) (Chlamydophila caviae) protein is Exodeoxyribonuclease 7 small subunit.